A 39-amino-acid polypeptide reads, in one-letter code: Protein MchX (39 aa).

A helical transmembrane segment spans residues 15–37; sequence SALSSTLLLSLIMSATLLEYSLS.

The protein localises to the cell inner membrane. Its function is as follows. Required for microcin H47 production. Possibly involved in a regulatory loop modulating its own expression and that of MchI and MchB. This Escherichia coli protein is Protein MchX (mchX).